Consider the following 367-residue polypeptide: DNA replication and repair protein RecF (367 aa).

Position 30–37 (glycine 30–threonine 37) interacts with ATP.

The protein belongs to the RecF family.

Its subcellular location is the cytoplasm. Its function is as follows. The RecF protein is involved in DNA metabolism; it is required for DNA replication and normal SOS inducibility. RecF binds preferentially to single-stranded, linear DNA. It also seems to bind ATP. The protein is DNA replication and repair protein RecF of Pseudomonas entomophila (strain L48).